We begin with the raw amino-acid sequence, 914 residues long: Dynamin-2A (914 aa).

Methionine 1 carries the post-translational modification N-acetylmethionine. The Dynamin-type G domain maps to 35–303 (PATFLNVVAL…IRSRMKLRLP (269 aa)). Residues 45–52 (GNVGAGKS) are G1 motif. Residue 45–52 (GNVGAGKS) participates in GTP binding. Residues 71–73 (ATR) form a G2 motif region. The segment at 143 to 146 (DLPG) is G3 motif. GTP-binding positions include 143–147 (DLPGL) and 204–207 (GKID). Positions 204-207 (GKID) are G4 motif. Residues 238–241 (AVIG) form a G5 motif region. Residues 507–522 (RREEELKGRSSKKGQD) show a composition bias toward basic and acidic residues. Disordered regions lie at residues 507-570 (RREE…TAGP) and 629-648 (PEDEVEKSKSSKDKKANGPD). Positions 523–535 (AEQSLLSRATSPQ) are enriched in polar residues. Composition is skewed to basic and acidic residues over residues 547 to 560 (SMKDKPSPQDKETP) and 634 to 645 (EKSKSSKDKKAN). The PH domain maps to 572–696 (GEITAGYLMK…WINKLQKVIQ (125 aa)). Positions 730-823 (LRWMSQEVRG…QLSIHDNRAA (94 aa)) constitute a GED domain. Residues 781 to 805 (NERIESLIQEDQNVKRRRERYQKQS) adopt a coiled-coil conformation. Residues 821-914 (RAAAASSYSD…PPPTGSAYRY (94 aa)) are disordered. Polar residues-rich tracts occupy residues 826–839 (SSYSDNSGTESSPR) and 852–866 (AFNSAANGPSDSLSK).

This sequence belongs to the TRAFAC class dynamin-like GTPase superfamily. Dynamin/Fzo/YdjA family. Binds PtdIns3P. Interacts with SH3P3 (via SH3 domain) and (via C-terminus) with GAMMA-ADR. May homooligomerize or heterooligomerize.

The protein localises to the cytoplasm. It is found in the cytosol. It localises to the golgi apparatus membrane. Its subcellular location is the cytoskeleton. The protein resides in the phragmoplast. The protein localises to the cytoplasmic vesicle. It is found in the clathrin-coated vesicle. It carries out the reaction GTP + H2O = GDP + phosphate + H(+). With respect to regulation, increased GTPase activity in the presence of phosphatidic acid. Microtubule-associated force-producing protein involved in clathrin-mediated vesicle trafficking from the trans-Golgi network to the central vacuole. Able to bind and hydrolyze GTP. Binds specifically to phosphatidylinositol 3-phosphate (PtdIns3P). This chain is Dynamin-2A (DRP2A), found in Arabidopsis thaliana (Mouse-ear cress).